The following is a 420-amino-acid chain: Phytoene synthase 1, chloroplastic (420 aa).

The transit peptide at 1–70 (MAAITLLRSA…GEIARTSPVY (70 aa)) directs the protein to the chloroplast.

Belongs to the phytoene/squalene synthase family. As to expression, expressed in leaves. Highly expressed in developing leaves. Expressed at low levels in roots.

The protein localises to the plastid. It localises to the chloroplast membrane. It is found in the chloroplast. Its subcellular location is the plastoglobule. The enzyme catalyses 2 (2E,6E,10E)-geranylgeranyl diphosphate = 15-cis-phytoene + 2 diphosphate. In terms of biological role, catalyzes the conversion of geranylgeranyl diphosphate to phytoene. Mediates the first committed step in carotenoid biosynthesis. The chain is Phytoene synthase 1, chloroplastic from Oryza sativa subsp. japonica (Rice).